The sequence spans 1486 residues: Chromosome partition protein MukB (1486 aa).

An ATP-binding site is contributed by 34-41 (GGNGAGKS). Coiled-coil stretches lie at residues 326 to 418 (LEAD…QYNQ), 444 to 480 (LETF…QAYQ), and 509 to 603 (RHLA…RAPV). The flexible hinge stretch occupies residues 666 to 783 (PGGSEDQRLN…EVPLFGRAAR (118 aa)). 3 coiled-coil regions span residues 835 to 923 (EAEI…AKLE), 977 to 1115 (EMLS…TAKA), and 1209 to 1266 (VEAI…QNVS).

This sequence belongs to the SMC family. MukB subfamily. In terms of assembly, homodimerization via its hinge domain. Binds to DNA via its C-terminal region. Interacts, and probably forms a ternary complex, with MukE and MukF via its C-terminal region. The complex formation is stimulated by calcium or magnesium. Interacts with tubulin-related protein FtsZ.

It is found in the cytoplasm. The protein localises to the nucleoid. Functionally, plays a central role in chromosome condensation, segregation and cell cycle progression. Functions as a homodimer, which is essential for chromosome partition. Involved in negative DNA supercoiling in vivo, and by this means organize and compact chromosomes. May achieve or facilitate chromosome segregation by condensation DNA from both sides of a centrally located replisome during cell division. In Escherichia coli O127:H6 (strain E2348/69 / EPEC), this protein is Chromosome partition protein MukB.